The sequence spans 165 residues: Transcription antitermination protein NusB (165 aa).

Residues Met-1–Arg-27 are disordered. Basic and acidic residues predominate over residues Asn-10–Lys-21.

The protein belongs to the NusB family.

Involved in transcription antitermination. Required for transcription of ribosomal RNA (rRNA) genes. Binds specifically to the boxA antiterminator sequence of the ribosomal RNA (rrn) operons. This Pseudomonas savastanoi pv. phaseolicola (strain 1448A / Race 6) (Pseudomonas syringae pv. phaseolicola (strain 1448A / Race 6)) protein is Transcription antitermination protein NusB.